The sequence spans 155 residues: FUN14 domain-containing protein 1 (155 aa).

Over 1 to 47 the chain is Cytoplasmic; the sequence is MATRNPPPQEYESDDDSYEVLDLTEYARRHHWWNRVFGHSSGPMVEK. 2 positions are modified to phosphoserine: Ser-13 and Ser-17. Tyr-18 carries the phosphotyrosine; by SRC modification. A YXXL motif is present at residues 18 to 21; it reads YEVL. The chain crosses the membrane as a helical span at residues 48 to 68; sequence YSVATQIVMGGVSGWCAGFLF. Topologically, residues 69–74 are mitochondrial intermembrane; sequence QKVGKL. Residues 75-95 traverse the membrane as a helical segment; sequence AATAVGGGFLLLQIASHSGYV. Residues 96–133 are Cytoplasmic-facing; it reads QIDWKRVEKDVNKAKRQIKKRANKAAPEINNIIEEATE. A Glycyl lysine isopeptide (Lys-Gly) (interchain with G-Cter in ubiquitin) cross-link involves residue Lys-119. Residues 134–154 form a helical membrane-spanning segment; it reads FVKQNIVISSGFVGGFLLGLA. Ser-155 is a topological domain (mitochondrial intermembrane).

Belongs to the FUN14 family. In terms of assembly, interacts (via YXXL motif) with MAP1 LC3 family proteins MAP1LC3A, MAP1LC3B and GABARAP. Interacts with DNM1L/DPR1. Interacts with GPX4. In terms of processing, phosphorylation at Ser-13 by CK2 and at Tyr-18 by SRC inhibits activation of mitophagy. Following hypoxia, dephosphorylated at Tyr-18, leading to interaction with MAP1 LC3 family proteins and triggering mitophagy. Dephosphorylation is mediated by PGAM5. Phosphorylated by ULK1 at Ser-17 which enhances FUNDC1 binding to LC3. Post-translationally, ubiquitinated on Lys-119. Deubiquitinated by USP19; leading to hypoxia-induced DRP1 oligomerization and GTPase activity.

It is found in the mitochondrion outer membrane. In terms of biological role, integral mitochondrial outer-membrane protein that mediates the formation of mitochondria-associated endoplasmic reticulum membranes (MAMs). In turn, mediates angiogenesis and neoangiogenesis through interference with intracellular Ca(2+) communication and regulation of the vascular endothelial growth factor receptor KDR/VEGFR2 expression at both mRNA and protein levels. Also acts as an activator of hypoxia-induced mitophagy, an important mechanism for mitochondrial quality and homeostasis, by interacting with and recruiting LC3 protein family to mitochondria. Mechanistically, recruits DRP1 at ER-mitochondria contact sites leading to DRP1 oligomerization and GTPase activity to facilitate mitochondrial fission during hypoxia. Additionally, plays a role in hepatic ferroptosis by interacting directly with glutathione peroxidase/GPX4 to facilitate its recruitment into mitochondria through TOM/TIM complex where it is degraded by mitophagy. The sequence is that of FUN14 domain-containing protein 1 (FUNDC1) from Bos taurus (Bovine).